The primary structure comprises 212 residues: Probable GTP-binding protein EngB (212 aa).

Positions Ser-38–Pro-210 constitute an EngB-type G domain. Residues Gly-46 to Ser-53, Gly-73 to Gln-77, Asp-91 to Gly-94, Thr-158 to Asp-161, and Val-189 to Asn-191 contribute to the GTP site. Residues Ser-53 and Thr-75 each contribute to the Mg(2+) site.

It belongs to the TRAFAC class TrmE-Era-EngA-EngB-Septin-like GTPase superfamily. EngB GTPase family. Mg(2+) is required as a cofactor.

Its function is as follows. Necessary for normal cell division and for the maintenance of normal septation. The sequence is that of Probable GTP-binding protein EngB from Rickettsia africae (strain ESF-5).